Consider the following 230-residue polypeptide: Small ribosomal subunit protein uS2 (230 aa).

Belongs to the universal ribosomal protein uS2 family.

The chain is Small ribosomal subunit protein uS2 from Prochlorococcus marinus (strain NATL2A).